The sequence spans 278 residues: TIMELESS-interacting protein (278 aa).

A disordered region spans residues 1–59; that stretch reads MLEQEENGLFEIPDYEHVEDETFPPFPPPASPERDPADAEPEEGSGSGVPVPPKRTVKR. The tract at residues 64–140 is interaction with TIMELESS; the sequence is LDATRLTSER…KEVQTCLKRI (77 aa). Disordered stretches follow at residues 155-197 and 216-278; these read NDEV…EEQQ and LSNS…TNLD. S191 and S219 each carry phosphoserine. A compositionally biased stretch (acidic residues) spans 226–239; sequence VTVEENSTGEDQEE. T233 is subject to Phosphothreonine. Residues 259–278 are compositionally biased toward basic and acidic residues; the sequence is THEEEQCKAEETQLDHTNLD.

This sequence belongs to the CSM3 family. Interacts with MCM6 and MCM7. Interacts with TIMELESS (via N-terminus), which impairs TIMELESS self-association. Interacts with RPA2 and PRDX2. In terms of tissue distribution, expressed in brain.

It is found in the cytoplasm. The protein localises to the nucleus. Functionally, plays an important role in the control of DNA replication and the maintenance of replication fork stability. Important for cell survival after DNA damage or replication stress. May be specifically required for the ATR-CHEK1 pathway in the replication checkpoint induced by hydroxyurea or ultraviolet light. Forms a complex with TIMELESS and this complex regulates DNA replication processes under both normal and stress conditions, stabilizes replication forks and influences both CHEK1 phosphorylation and the intra-S phase checkpoint in response to genotoxic stress. The polypeptide is TIMELESS-interacting protein (Tipin) (Mus musculus (Mouse)).